The primary structure comprises 136 residues: MFQSLIAIDYGKARIGLASGQMITKTATPIGTVEAYDGVPNWIELDKIVKRWNPSDIVIGLPLDTQDFETDITKAAKDFAKEVKERYKRNVHLINEAYSTREARWRLEEVKSKKVSHIKVDALAACVILETWMAEN.

The protein belongs to the YqgF nuclease family.

Its subcellular location is the cytoplasm. In terms of biological role, could be a nuclease involved in processing of the 5'-end of pre-16S rRNA. The chain is Putative pre-16S rRNA nuclease from Francisella philomiragia subsp. philomiragia (strain ATCC 25017 / CCUG 19701 / FSC 153 / O#319-036).